We begin with the raw amino-acid sequence, 137 residues long: uncharacterized protein (137 aa).

The Sm domain occupies 30–105 (SLLCVFTALR…IRFIQIPDKI (76 aa)).

This is an uncharacterized protein from Dictyostelium discoideum (Social amoeba).